The chain runs to 98 residues: Large ribosomal subunit protein uL23 (98 aa).

This sequence belongs to the universal ribosomal protein uL23 family. As to quaternary structure, part of the 50S ribosomal subunit. Contacts protein L29, and trigger factor when it is bound to the ribosome.

Its function is as follows. One of the early assembly proteins it binds 23S rRNA. One of the proteins that surrounds the polypeptide exit tunnel on the outside of the ribosome. Forms the main docking site for trigger factor binding to the ribosome. The protein is Large ribosomal subunit protein uL23 of Nitrobacter hamburgensis (strain DSM 10229 / NCIMB 13809 / X14).